A 308-amino-acid chain; its full sequence is High-affinity branched-chain amino acid transport system permease protein LivH (308 aa).

The Cytoplasmic segment spans residues 1 to 21 (MSEQFLYFLQQMFNGVTLGST). A helical membrane pass occupies residues 22–42 (YALIAIGYTMVYGIIGMINFA). The Periplasmic segment spans residues 43–45 (HGE). Residues 46–66 (VYMIGSYVSFMIIAALMMMGI) traverse the membrane as a helical segment. At 67–68 (DT) the chain is on the cytoplasmic side. The chain crosses the membrane as a helical span at residues 69 to 89 (GWLLVAAGFVGAIVIASAYGW). Over 90–104 (SIERVAYRPVRNSKR) the chain is Periplasmic. Residues 105–125 (LIALISAIGMSIFLQNYVSLT) traverse the membrane as a helical segment. Over 126-154 (EGSRDVALPSLFNGQWVVGHSENFSASIT) the chain is Cytoplasmic. Residues 155–175 (TMQAVIWIVTFLAMLALTIFI) form a helical membrane-spanning segment. Residues 176 to 203 (RYSRMGRACRACAEDLKMASLLGINTDR) lie on the Periplasmic side of the membrane. Residues 204-224 (VIALTFVIGAAMAAVAGVLLG) form a helical membrane-spanning segment. At 225-245 (QFYGVINPYIGFMAGMKAFTA) the chain is on the cytoplasmic side. The helical transmembrane segment at 246 to 266 (AVLGGIGSIPGAMIGGLILGI) threads the bilayer. At 267 to 280 (AEALSSAYLSTEYK) the chain is on the periplasmic side. The chain crosses the membrane as a helical span at residues 281 to 301 (DVVSFALLILVLLVMPTGILG). Over 302–308 (RPEVEKV) the chain is Cytoplasmic.

Belongs to the binding-protein-dependent transport system permease family. LivHM subfamily.

The protein resides in the cell inner membrane. Its function is as follows. Part of the binding-protein-dependent transport system for branched-chain amino acids. Probably responsible for the translocation of the substrates across the membrane. The protein is High-affinity branched-chain amino acid transport system permease protein LivH (livH) of Escherichia coli O157:H7.